Consider the following 322-residue polypeptide: Large ribosomal subunit protein uL10 (322 aa).

The segment at alanine 294–glutamate 322 is disordered. Residues glutamate 304–glutamate 322 show a composition bias toward acidic residues.

Belongs to the universal ribosomal protein uL10 family. As to quaternary structure, P0 forms a pentameric complex by interaction with dimers of P1 and P2. In terms of processing, phosphorylated.

Functionally, ribosomal protein P0 is the functional equivalent of E.coli protein L10. The chain is Large ribosomal subunit protein uL10 from Lupinus luteus (European yellow lupine).